The sequence spans 638 residues: 1-deoxy-D-xylulose-5-phosphate synthase (638 aa).

Thiamine diphosphate-binding positions include His75 and Ala116–Ser118. A Mg(2+)-binding site is contributed by Asp147. Residues Gly148 to Ala149, Asn177, Tyr288, and Glu370 each bind thiamine diphosphate. Asn177 contacts Mg(2+).

It belongs to the transketolase family. DXPS subfamily. Homodimer. Requires Mg(2+) as cofactor. Thiamine diphosphate is required as a cofactor.

It carries out the reaction D-glyceraldehyde 3-phosphate + pyruvate + H(+) = 1-deoxy-D-xylulose 5-phosphate + CO2. It functions in the pathway metabolic intermediate biosynthesis; 1-deoxy-D-xylulose 5-phosphate biosynthesis; 1-deoxy-D-xylulose 5-phosphate from D-glyceraldehyde 3-phosphate and pyruvate: step 1/1. Its function is as follows. Catalyzes the acyloin condensation reaction between C atoms 2 and 3 of pyruvate and glyceraldehyde 3-phosphate to yield 1-deoxy-D-xylulose-5-phosphate (DXP). The sequence is that of 1-deoxy-D-xylulose-5-phosphate synthase from Cupriavidus pinatubonensis (strain JMP 134 / LMG 1197) (Cupriavidus necator (strain JMP 134)).